The sequence spans 308 residues: Taste receptor type 2 member 46 (308 aa).

Met-1 is a topological domain (extracellular). Residues 2-22 (ITFLSITFSILVGVIFVIGNF) traverse the membrane as a helical segment. Over 23-46 (ANGFIALVNSIEWVKRQKISFADQ) the chain is Cytoplasmic. A helical membrane pass occupies residues 47–67 (ILTGLAVSRVGLLWVLLLHLY). At 68–86 (ATEFNLAFYSVEVRITAYN) the chain is on the extracellular side. Residues 87 to 107 (VWIVTNHFSNWLSTSLSMFYL) form a helical membrane-spanning segment. At 108-126 (LKIATFSNLIFLHLKRKVK) the chain is on the cytoplasmic side. Residues 127-147 (SVILVTLLGPLLFLVCHLFVM) form a helical membrane-spanning segment. The Extracellular portion of the chain corresponds to 148 to 178 (NMNHIVWRKEYEGNITWRIKLRSAMYLSNVT). 2 N-linked (GlcNAc...) asparagine glycosylation sites follow: Asn-161 and Asn-176. Residues 179–199 (VTMLANLIPLTLTLMSFLLLI) form a helical membrane-spanning segment. Over 200–229 (CSLCKHLKKMQVHGKGSQDPSTKVHIKALQ) the chain is Cytoplasmic. Residues 230–250 (TVTSFLLLCAIYFLSMILSVW) form a helical membrane-spanning segment. Residues 251–258 (NFELEKKP) are Extracellular-facing. Residues 259–279 (VFMFCQAVIFSYPSTHPLILI) traverse the membrane as a helical segment. Residues 280–308 (WGNKKLKQIFLSVLWNVRYWVKGQKPSSP) lie on the Cytoplasmic side of the membrane.

The protein belongs to the G-protein coupled receptor T2R family.

The protein localises to the membrane. Its subcellular location is the cell projection. It is found in the cilium membrane. Functionally, receptor that may play a role in the perception of bitterness and is gustducin-linked. May play a role in sensing the chemical composition of the gastrointestinal content. The activity of this receptor may stimulate alpha gustducin, mediate PLC-beta-2 activation and lead to the gating of TRPM5. In airway epithelial cells, binding of bitter compounds increases the intracellular calcium ion concentration and stimulates ciliary beat frequency. In Macaca mulatta (Rhesus macaque), this protein is Taste receptor type 2 member 46 (TAS2R46).